An 872-amino-acid polypeptide reads, in one-letter code: Metabotropic glutamate receptor 2 (872 aa).

A signal peptide spans 1–18 (MESLLRFLALLLLRGAVA). Topologically, residues 19 to 568 (EGPAKKVLTL…EYIRWGDAWA (550 aa)) are extracellular. Cysteine 50 and cysteine 92 are oxidised to a cystine. L-glutamate-binding residues include arginine 57, arginine 61, serine 145, alanine 166, and threonine 168. N-linked (GlcNAc...) asparagine glycans are attached at residues asparagine 203 and asparagine 286. 7 disulfide bridges follow: cysteine 234–cysteine 518, cysteine 355–cysteine 362, cysteine 400–cysteine 407, cysteine 500–cysteine 519, cysteine 504–cysteine 522, cysteine 525–cysteine 537, and cysteine 540–cysteine 553. Aspartate 295 is an L-glutamate binding site. N-linked (GlcNAc...) asparagine glycosylation is present at asparagine 338. Residue lysine 377 coordinates L-glutamate. Residue asparagine 402 is glycosylated (N-linked (GlcNAc...) asparagine). N-linked (GlcNAc...) asparagine glycosylation is present at asparagine 547. Residues 569–589 (VGPVTIACLGALATLFVLGVF) traverse the membrane as a helical segment. The Cytoplasmic segment spans residues 590-604 (VRHNATPVVKASGRE). A helical membrane pass occupies residues 605–625 (LCYILLGGVFLCYCMTFIFIA). The Extracellular segment spans residues 626–633 (KPSTAVCT). The cysteines at positions 632 and 721 are disulfide-linked. Residues 634-651 (LRRLGLGTAFSVCYSALL) traverse the membrane as a helical segment. The Cytoplasmic segment spans residues 652 to 679 (TKTNRIARIFGGAREGAQRPRFISPASQ). The important for interaction with HTR2A stretch occupies residues 677–685 (ASQVAICLA). Residues 680–700 (VAICLALISGQLLIVAAWLVV) form a helical membrane-spanning segment. Residues 701–726 (EAPGIGKETAPERREVVTLRCNHRDA) are Extracellular-facing. A helical membrane pass occupies residues 727–747 (SMLGSLAYNVLLIALCTLYAF). The Cytoplasmic segment spans residues 748–760 (KTRKCPENFNEAK). Residues 761–781 (FIGFTMYTTCIIWLAFLPIFY) traverse the membrane as a helical segment. The Extracellular segment spans residues 782–798 (VTSSDYRVQTTTMCVSV). The helical transmembrane segment at 799–819 (SLSGSVVLGCLFAPKLHIILF) threads the bilayer. Residues 820-872 (QPQKNVVSHRAPTSRFGSAAPRASANLGQGSGSQLVPTVCNGREVVDSTTSSL) are Cytoplasmic-facing.

Belongs to the G-protein coupled receptor 3 family. In terms of assembly, forms heterodimers with GRM3 or GRM4. Interacts with GNAI1. Interacts with TAMALIN. Interacts with HTR2A. Detected in neurons in brain cortex (at protein level).

It localises to the cell membrane. The protein localises to the synapse. Its subcellular location is the cell projection. It is found in the dendrite. Its function is as follows. Dimeric G protein-coupled receptor which is activated by the excitatory neurotransmitter L-glutamate. Plays critical roles in modulating synaptic transmission and neuronal excitability. Upon activation by glutamate, inhibits presynaptic calcium channels, reducing further glutamate release and dampening excitatory signaling. Mechanistically, ligand binding causes a conformation change that triggers signaling via guanine nucleotide-binding proteins (G proteins) and modulates the activity of down-stream effectors, such as adenylate cyclase. May mediate suppression of neurotransmission or may be involved in synaptogenesis or synaptic stabilization. In Mus musculus (Mouse), this protein is Metabotropic glutamate receptor 2 (Grm2).